A 49-amino-acid polypeptide reads, in one-letter code: Defensin Tk-AMP-D2 (49 aa).

4 cysteine pairs are disulfide-bonded: cysteine 3-cysteine 49, cysteine 14-cysteine 34, cysteine 20-cysteine 43, and cysteine 24-cysteine 45.

Its function is as follows. Plant defense peptide. The sequence is that of Defensin Tk-AMP-D2 from Triticum kiharae (Wheat).